Consider the following 67-residue polypeptide: Small ribosomal subunit protein eS17 (67 aa).

It belongs to the eukaryotic ribosomal protein eS17 family. In terms of assembly, part of the 30S ribosomal subunit.

The chain is Small ribosomal subunit protein eS17 from Pyrococcus furiosus (strain ATCC 43587 / DSM 3638 / JCM 8422 / Vc1).